The sequence spans 90 residues: Bombyxin D-1 (90 aa).

An N-terminal signal peptide occupies residues 1–18 (MKLLGFFLSWVSVCAIVS). Disulfide bonds link Cys-27–Cys-77, Cys-39–Cys-90, and Cys-76–Cys-81. Residues 48–68 (SVAHYAGYGWPLLPSLSEERG) constitute a propeptide, c peptide like.

The protein belongs to the insulin family. Heterodimer of a B chain and an A chain linked by two disulfide bonds.

The protein localises to the secreted. In terms of biological role, brain peptide responsible for activation of prothoracic glands to produce ecdysone in insects. The sequence is that of Bombyxin D-1 (BBXD1) from Bombyx mori (Silk moth).